A 345-amino-acid chain; its full sequence is Type II methyltransferase M.AplI (345 aa).

Positions 25 to 325 constitute an SAM-dependent MTase C5-type domain; that stretch reads LVVLDLFAGC…KSVKMTLENK (301 aa). Cysteine 93 is an active-site residue.

It belongs to the class I-like SAM-binding methyltransferase superfamily. C5-methyltransferase family.

The enzyme catalyses a 2'-deoxycytidine in DNA + S-adenosyl-L-methionine = a 5-methyl-2'-deoxycytidine in DNA + S-adenosyl-L-homocysteine + H(+). Its function is as follows. A methylase, recognizes the double-stranded sequence 5'-CTGCAG-3', methylates C-4 on both strands, and protects the DNA from cleavage by the AplI endonuclease. The protein is Type II methyltransferase M.AplI (aplIM) of Arthrospira platensis (strain NIES-39 / UTEX 3086 / IAM M-135) (Spirulina platensis).